A 290-amino-acid chain; its full sequence is 4-hydroxy-tetrahydrodipicolinate synthase (290 aa).

Thr46 is a binding site for pyruvate. The Proton donor/acceptor role is filled by Tyr134. Catalysis depends on Lys163, which acts as the Schiff-base intermediate with substrate. Val205 contributes to the pyruvate binding site.

Belongs to the DapA family. Homotetramer; dimer of dimers.

It localises to the cytoplasm. It catalyses the reaction L-aspartate 4-semialdehyde + pyruvate = (2S,4S)-4-hydroxy-2,3,4,5-tetrahydrodipicolinate + H2O + H(+). Its pathway is amino-acid biosynthesis; L-lysine biosynthesis via DAP pathway; (S)-tetrahydrodipicolinate from L-aspartate: step 3/4. Its function is as follows. Catalyzes the condensation of (S)-aspartate-beta-semialdehyde [(S)-ASA] and pyruvate to 4-hydroxy-tetrahydrodipicolinate (HTPA). In Bacillus subtilis (strain 168), this protein is 4-hydroxy-tetrahydrodipicolinate synthase.